The primary structure comprises 344 residues: tRNA N6-adenosine threonylcarbamoyltransferase (344 aa).

H111 and H115 together coordinate Fe cation. Substrate is bound by residues 134–138 (LVSGG), D167, G180, and N273. D301 is a binding site for Fe cation.

It belongs to the KAE1 / TsaD family. Fe(2+) serves as cofactor.

It is found in the cytoplasm. It catalyses the reaction L-threonylcarbamoyladenylate + adenosine(37) in tRNA = N(6)-L-threonylcarbamoyladenosine(37) in tRNA + AMP + H(+). In terms of biological role, required for the formation of a threonylcarbamoyl group on adenosine at position 37 (t(6)A37) in tRNAs that read codons beginning with adenine. Is involved in the transfer of the threonylcarbamoyl moiety of threonylcarbamoyl-AMP (TC-AMP) to the N6 group of A37, together with TsaE and TsaB. TsaD likely plays a direct catalytic role in this reaction. This is tRNA N6-adenosine threonylcarbamoyltransferase from Cupriavidus taiwanensis (strain DSM 17343 / BCRC 17206 / CCUG 44338 / CIP 107171 / LMG 19424 / R1) (Ralstonia taiwanensis (strain LMG 19424)).